A 206-amino-acid polypeptide reads, in one-letter code: BAG family molecular chaperone regulator 1B (206 aa).

One can recognise a BAG domain in the interval 122 to 202 (IEAYIDELQQ…QYLSKLDSTK (81 aa)). A Phosphoserine modification is found at Ser144.

Binds to the ATPase domain of HSP70/HSC chaperones.

Its function is as follows. Inhibits the chaperone activity of HSP70/HSC70 by promoting substrate release. The polypeptide is BAG family molecular chaperone regulator 1B (bag102) (Schizosaccharomyces pombe (strain 972 / ATCC 24843) (Fission yeast)).